The primary structure comprises 459 residues: SLIT-ROBO Rho GTPase-activating protein 2C (459 aa).

The 304-residue stretch at 22-325 (KEIRAQLTEQ…AVENLDATSD (304 aa)) folds into the F-BAR domain. A compositionally biased stretch (basic and acidic residues) spans 181 to 202 (LKEAEKQEEKQIGKSVKQEDRQ). Residues 181-211 (LKEAEKQEEKQIGKSVKQEDRQTPCSPDSTA) form a disordered region. Residues 363 to 401 (QSELVQRCQQLQSRLSTLKIENEEVKKTMEATLQTIQDI) are a coiled coil.

As to quaternary structure, homodimer. Interacts (via F-BAR domain) with SRGAP2/SRGAP2A (via F-BAR domain); formation of the heterodimer inhibits SRGAP2/SRGAP2A function. As to expression, ubiquitously expressed with higher expression in cerebellum. Probably expressed in fetal and adult neurons (at protein level).

Its function is as follows. Human-specific protein that acts as a key modifier of cortical connectivity in the human brain. Acts by inhibiting the functions of ancestral paralog SRGAP2/SRGAP2A, a postsynaptic protein that regulates excitatory and inhibitory synapse maturation and density in cortical pyramidal neurons. SRGAP2C is unstable but is able to heterodimerize with SRGAP2/SRGAP2A, thereby reducing SRGAP2/SRGAP2A levels through proteasome-dependent degradation. Inhibition of SRGAP2/SRGAP2A by SRGAP2C leads to an increase in synaptic density and protracted synaptic maturation of both excitatory and inhibitory synapses. Modifies cortical circuit connectivity by increasing the number of local and long-range cortical inputs received by layer 2/3 pyramidal neurons. Also able to increase the probability of sensory-evoked responses by layer 2/3 pyramidal neurons. The polypeptide is SLIT-ROBO Rho GTPase-activating protein 2C (Homo sapiens (Human)).